We begin with the raw amino-acid sequence, 444 residues long: C4-dicarboxylate transport protein (444 aa).

Transmembrane regions (helical) follow at residues 19–39 (HLYF…HFYP), 55–75 (LVKM…IAGM), 90–110 (IYFL…SNIL), 161–181 (ILQV…VGDL), 199–219 (LVAI…AFTI), 230–250 (LAFL…VVLG), 343–363 (LLLV…AGFI), and 366–386 (AATL…ILGI).

The protein belongs to the dicarboxylate/amino acid:cation symporter (DAACS) (TC 2.A.23) family.

The protein resides in the cell inner membrane. In terms of biological role, responsible for the transport of dicarboxylates such as succinate, fumarate, and malate from the periplasm across the membrane. The protein is C4-dicarboxylate transport protein of Allorhizobium ampelinum (strain ATCC BAA-846 / DSM 112012 / S4) (Agrobacterium vitis (strain S4)).